The following is an 82-amino-acid chain: Small ribosomal subunit protein bS16 (82 aa).

Belongs to the bacterial ribosomal protein bS16 family.

The polypeptide is Small ribosomal subunit protein bS16 (Microcystis aeruginosa (strain NIES-843 / IAM M-2473)).